A 126-amino-acid polypeptide reads, in one-letter code: Fluoride-specific ion channel FluC (126 aa).

The next 4 helical transmembrane spans lie at 6-26 (FVAV…FAVL), 36-56 (YGTL…VGFF), 68-88 (LLAV…SSEV), and 99-119 (IGML…MLGL). The Na(+) site is built by Gly-76 and Thr-79.

It belongs to the fluoride channel Fluc/FEX (TC 1.A.43) family.

It localises to the cell inner membrane. It catalyses the reaction fluoride(in) = fluoride(out). Its activity is regulated as follows. Na(+) is not transported, but it plays an essential structural role and its presence is essential for fluoride channel function. In terms of biological role, fluoride-specific ion channel. Important for reducing fluoride concentration in the cell, thus reducing its toxicity. This is Fluoride-specific ion channel FluC from Ralstonia nicotianae (strain ATCC BAA-1114 / GMI1000) (Ralstonia solanacearum).